A 753-amino-acid chain; its full sequence is Pesticidal crystal protein Cry20Aa (753 aa).

A compositionally biased stretch (polar residues) spans D680 to G696. Residues D680–N721 form a disordered region. Residues Q712–N721 are compositionally biased toward low complexity.

This sequence belongs to the delta endotoxin family. Post-translationally, has low mosquitocidal activity probably due to rapid proteolysis to inactive 56 kDa and 43 kDa proteins.

Functionally, promotes colloidosmotic lysis by binding to the midgut epithelial cells of mosquitos. Active against Aedes aegypti and Culex quinquefasciatus larvae. This chain is Pesticidal crystal protein Cry20Aa (cry20Aa), found in Bacillus thuringiensis subsp. fukuokaensis.